The following is a 544-amino-acid chain: Probable protein kinase UbiB (544 aa).

The Protein kinase domain maps to 123-505; the sequence is EFDEQALASA…GRQKSHNVRS (383 aa). Residues 129–137 and lysine 156 each bind ATP; that span reads LASASIAQV. Aspartate 291 functions as the Proton acceptor in the catalytic mechanism. Residues 522-540 traverse the membrane as a helical segment; the sequence is LPLWLSCGTLVTVLLVLLL.

The protein belongs to the ABC1 family. UbiB subfamily.

It localises to the cell inner membrane. It functions in the pathway cofactor biosynthesis; ubiquinone biosynthesis [regulation]. In terms of biological role, is probably a protein kinase regulator of UbiI activity which is involved in aerobic coenzyme Q (ubiquinone) biosynthesis. In Actinobacillus pleuropneumoniae serotype 7 (strain AP76), this protein is Probable protein kinase UbiB.